Reading from the N-terminus, the 295-residue chain is MEKMSRPLPLNPTFIPPPYGVLRSLLENPLKLPLHHEDAFSKDKDKEKKLDDESNSPTVPQSAFLGPTLWDKTLPYDGDTFQLEYMDLEEFLSENGIPPSPSQHDHSPHPPGLQPASSAAPSVMDLSSRASAPLHPGIPSPNCMQSPIRPGQLLPANRNTPSPIDPDTIQVPVGYEPDPADLALSSIPGQEMFDPRKRKFSEEELKPQPMIKKARKVFIPDDLKDDKYWARRRKNNMAAKRSRDARRLKENQIAIRASFLEKENSALRQEVADLRKELGKCKNILAKYEARHGPL.

Residues 37–52 (EDAFSKDKDKEKKLDD) are compositionally biased toward basic and acidic residues. Disordered stretches follow at residues 37 to 70 (EDAF…PTLW) and 93 to 167 (SENG…IDPD). Residues 225–288 (DDKYWARRRK…GKCKNILAKY (64 aa)) form the bZIP domain. Positions 227–247 (KYWARRRKNNMAAKRSRDARR) are basic motif. The leucine-zipper stretch occupies residues 248–255 (LKENQIAI).

It belongs to the bZIP family. PAR subfamily. Binds DNA specifically as homodimer or heterodimer with other PAR factors. Highly expressed in liver; lower levels in lung and kidney.

It is found in the nucleus. This is Hepatic leukemia factor (HLF) from Homo sapiens (Human).